The primary structure comprises 143 residues: Protein STIG1 (143 aa).

Positions 1 to 23 are cleaved as a signal peptide; the sequence is MDFIILLIAILALSSTPITIISG. Positions 76–87 are sufficient for PI(4)P binding; that stretch reads RTCCFNYFCVDL. The segment at 80–83 is sufficient for binding to the extracellular domain of PRK2; the sequence is FNYF. Residues 88-115 form a sufficient for PI(3)P binding region; sequence FTNRFNCGSCGLVCIVGTRCCGGICVDI.

The protein belongs to the STIG1 family. In terms of assembly, interacts with PRK1 and PRK2 (via extracellular domain). In terms of tissue distribution, expressed in the stigma and the upper section of the style.

It localises to the secreted. Its subcellular location is the extracellular space. It is found in the apoplast. Promotes pollen tube growth. A C-terminal peptide is cleaved from the propeptide in the stigmatic exudate and represent the major form of STIG1. Binds phosphoinositol lipids. The binding of external phosphatidylinositol 3-phosphate (PI(3)P) and PRK2 by STIG1 induces a rapid intracellular reactive oxygen species elevation. The sequence is that of Protein STIG1 from Solanum lycopersicum (Tomato).